Reading from the N-terminus, the 270-residue chain is Ribosomal RNA small subunit methyltransferase A (270 aa).

S-adenosyl-L-methionine contacts are provided by N18, L20, G45, E66, D91, and N112.

It belongs to the class I-like SAM-binding methyltransferase superfamily. rRNA adenine N(6)-methyltransferase family. RsmA subfamily.

The protein resides in the cytoplasm. The catalysed reaction is adenosine(1518)/adenosine(1519) in 16S rRNA + 4 S-adenosyl-L-methionine = N(6)-dimethyladenosine(1518)/N(6)-dimethyladenosine(1519) in 16S rRNA + 4 S-adenosyl-L-homocysteine + 4 H(+). Functionally, specifically dimethylates two adjacent adenosines (A1518 and A1519) in the loop of a conserved hairpin near the 3'-end of 16S rRNA in the 30S particle. May play a critical role in biogenesis of 30S subunits. The sequence is that of Ribosomal RNA small subunit methyltransferase A from Shewanella piezotolerans (strain WP3 / JCM 13877).